We begin with the raw amino-acid sequence, 267 residues long: Tryptophan synthase alpha chain (267 aa).

Active-site proton acceptor residues include Glu49 and Asp60.

This sequence belongs to the TrpA family. In terms of assembly, tetramer of two alpha and two beta chains.

The catalysed reaction is (1S,2R)-1-C-(indol-3-yl)glycerol 3-phosphate + L-serine = D-glyceraldehyde 3-phosphate + L-tryptophan + H2O. It functions in the pathway amino-acid biosynthesis; L-tryptophan biosynthesis; L-tryptophan from chorismate: step 5/5. Its function is as follows. The alpha subunit is responsible for the aldol cleavage of indoleglycerol phosphate to indole and glyceraldehyde 3-phosphate. The sequence is that of Tryptophan synthase alpha chain from Acinetobacter baylyi (strain ATCC 33305 / BD413 / ADP1).